The primary structure comprises 300 residues: NAD kinase (300 aa).

The active-site Proton acceptor is the aspartate 75. Residues aspartate 75–glycine 76, asparagine 149–aspartate 150, arginine 177, aspartate 179, threonine 190–serine 195, alanine 214, and glutamine 248 each bind NAD(+).

This sequence belongs to the NAD kinase family. A divalent metal cation is required as a cofactor.

The protein localises to the cytoplasm. It carries out the reaction NAD(+) + ATP = ADP + NADP(+) + H(+). In terms of biological role, involved in the regulation of the intracellular balance of NAD and NADP, and is a key enzyme in the biosynthesis of NADP. Catalyzes specifically the phosphorylation on 2'-hydroxyl of the adenosine moiety of NAD to yield NADP. This chain is NAD kinase, found in Paraburkholderia phymatum (strain DSM 17167 / CIP 108236 / LMG 21445 / STM815) (Burkholderia phymatum).